The sequence spans 360 residues: Peptide chain release factor 1 (360 aa).

An N5-methylglutamine modification is found at Gln-237.

Belongs to the prokaryotic/mitochondrial release factor family. In terms of processing, methylated by PrmC. Methylation increases the termination efficiency of RF1.

It is found in the cytoplasm. Its function is as follows. Peptide chain release factor 1 directs the termination of translation in response to the peptide chain termination codons UAG and UAA. This is Peptide chain release factor 1 from Pseudomonas syringae pv. tomato (strain ATCC BAA-871 / DC3000).